Here is a 474-residue protein sequence, read N- to C-terminus: Probable protein phosphatase 2C 37 (474 aa).

A disordered region spans residues 1-90 (MVMASAGVNM…RDDDGCSSTA (90 aa)). Residues 57–77 (LPASSASPSPSPTSSAASSDC) show a composition bias toward low complexity. A PPM-type phosphatase domain is found at 113 to 470 (AFGSVSLAGR…DNISVVVIDL (358 aa)). Positions 152, 153, and 387 each coordinate Mn(2+). Residues 406–434 (LEDGSPTSGRRAARSGEAASSSAGAPAAA) are disordered. Residues 420–434 (SGEAASSSAGAPAAA) are compositionally biased toward low complexity. Asp-461 serves as a coordination point for Mn(2+).

This sequence belongs to the PP2C family. Requires Mg(2+) as cofactor. The cofactor is Mn(2+).

The catalysed reaction is O-phospho-L-seryl-[protein] + H2O = L-seryl-[protein] + phosphate. The enzyme catalyses O-phospho-L-threonyl-[protein] + H2O = L-threonyl-[protein] + phosphate. This chain is Probable protein phosphatase 2C 37, found in Oryza sativa subsp. japonica (Rice).